A 289-amino-acid polypeptide reads, in one-letter code: ATP synthase gamma chain (289 aa).

Belongs to the ATPase gamma chain family. F-type ATPases have 2 components, CF(1) - the catalytic core - and CF(0) - the membrane proton channel. CF(1) has five subunits: alpha(3), beta(3), gamma(1), delta(1), epsilon(1). CF(0) has three main subunits: a, b and c.

It is found in the cell inner membrane. Produces ATP from ADP in the presence of a proton gradient across the membrane. The gamma chain is believed to be important in regulating ATPase activity and the flow of protons through the CF(0) complex. The polypeptide is ATP synthase gamma chain (Haemophilus influenzae (strain ATCC 51907 / DSM 11121 / KW20 / Rd)).